The primary structure comprises 67 residues: Conotoxin AbVIO (67 aa).

Residues 1–17 (VIIIAVLFLTACQLIAT) form the signal peptide. The propeptide occupies 18 to 40 (ASYARSERKHPDLRLSSRNSKLS). 3 cysteine pairs are disulfide-bonded: cysteine 43–cysteine 57, cysteine 50–cysteine 61, and cysteine 56–cysteine 66.

This sequence belongs to the conotoxin O1 superfamily. As to expression, expressed by the venom duct.

It is found in the secreted. The protein is Conotoxin AbVIO of Conus abbreviatus (Abbreviated cone).